Reading from the N-terminus, the 492-residue chain is Glutamyl-tRNA(Gln) amidotransferase subunit A (492 aa).

Residues K78 and S158 each act as charge relay system in the active site. The Acyl-ester intermediate role is filled by S182.

The protein belongs to the amidase family. GatA subfamily. Heterotrimer of A, B and C subunits.

The enzyme catalyses L-glutamyl-tRNA(Gln) + L-glutamine + ATP + H2O = L-glutaminyl-tRNA(Gln) + L-glutamate + ADP + phosphate + H(+). Functionally, allows the formation of correctly charged Gln-tRNA(Gln) through the transamidation of misacylated Glu-tRNA(Gln) in organisms which lack glutaminyl-tRNA synthetase. The reaction takes place in the presence of glutamine and ATP through an activated gamma-phospho-Glu-tRNA(Gln). The protein is Glutamyl-tRNA(Gln) amidotransferase subunit A of Rhodopseudomonas palustris (strain HaA2).